Here is a 363-residue protein sequence, read N- to C-terminus: 3-dehydroquinate synthase (363 aa).

Residues 72–77 (SGEQSK), 106–110 (GVIGD), 130–131 (TT), K142, and K151 contribute to the NAD(+) site. Positions 184, 246, and 263 each coordinate Zn(2+).

The protein belongs to the sugar phosphate cyclases superfamily. Dehydroquinate synthase family. The cofactor is Co(2+). Zn(2+) serves as cofactor. It depends on NAD(+) as a cofactor.

It is found in the cytoplasm. It catalyses the reaction 7-phospho-2-dehydro-3-deoxy-D-arabino-heptonate = 3-dehydroquinate + phosphate. It functions in the pathway metabolic intermediate biosynthesis; chorismate biosynthesis; chorismate from D-erythrose 4-phosphate and phosphoenolpyruvate: step 2/7. In terms of biological role, catalyzes the conversion of 3-deoxy-D-arabino-heptulosonate 7-phosphate (DAHP) to dehydroquinate (DHQ). This Bacillus pumilus (strain SAFR-032) protein is 3-dehydroquinate synthase.